A 127-amino-acid polypeptide reads, in one-letter code: Holo-[acyl-carrier-protein] synthase (127 aa).

Residues aspartate 7 and glutamate 53 each coordinate Mg(2+).

This sequence belongs to the P-Pant transferase superfamily. AcpS family. It depends on Mg(2+) as a cofactor.

Its subcellular location is the cytoplasm. It carries out the reaction apo-[ACP] + CoA = holo-[ACP] + adenosine 3',5'-bisphosphate + H(+). Its function is as follows. Transfers the 4'-phosphopantetheine moiety from coenzyme A to a Ser of acyl-carrier-protein. This Herpetosiphon aurantiacus (strain ATCC 23779 / DSM 785 / 114-95) protein is Holo-[acyl-carrier-protein] synthase.